We begin with the raw amino-acid sequence, 391 residues long: ATP phosphoribosyltransferase regulatory subunit (391 aa).

This sequence belongs to the class-II aminoacyl-tRNA synthetase family. HisZ subfamily. As to quaternary structure, heteromultimer composed of HisG and HisZ subunits.

It localises to the cytoplasm. The protein operates within amino-acid biosynthesis; L-histidine biosynthesis; L-histidine from 5-phospho-alpha-D-ribose 1-diphosphate: step 1/9. Required for the first step of histidine biosynthesis. May allow the feedback regulation of ATP phosphoribosyltransferase activity by histidine. This chain is ATP phosphoribosyltransferase regulatory subunit, found in Bacillus pumilus (strain SAFR-032).